The sequence spans 143 residues: SsrA-binding protein (143 aa).

It belongs to the SmpB family.

It localises to the cytoplasm. Functionally, required for rescue of stalled ribosomes mediated by trans-translation. Binds to transfer-messenger RNA (tmRNA), required for stable association of tmRNA with ribosomes. tmRNA and SmpB together mimic tRNA shape, replacing the anticodon stem-loop with SmpB. tmRNA is encoded by the ssrA gene; the 2 termini fold to resemble tRNA(Ala) and it encodes a 'tag peptide', a short internal open reading frame. During trans-translation Ala-aminoacylated tmRNA acts like a tRNA, entering the A-site of stalled ribosomes, displacing the stalled mRNA. The ribosome then switches to translate the ORF on the tmRNA; the nascent peptide is terminated with the 'tag peptide' encoded by the tmRNA and targeted for degradation. The ribosome is freed to recommence translation, which seems to be the essential function of trans-translation. This Deinococcus radiodurans (strain ATCC 13939 / DSM 20539 / JCM 16871 / CCUG 27074 / LMG 4051 / NBRC 15346 / NCIMB 9279 / VKM B-1422 / R1) protein is SsrA-binding protein.